Consider the following 262-residue polypeptide: Thiazole synthase (262 aa).

Catalysis depends on lysine 96, which acts as the Schiff-base intermediate with DXP. 1-deoxy-D-xylulose 5-phosphate is bound by residues glycine 157, 184-185 (AG), and 206-207 (NT).

This sequence belongs to the ThiG family. As to quaternary structure, homotetramer. Forms heterodimers with either ThiH or ThiS.

It localises to the cytoplasm. It carries out the reaction [ThiS sulfur-carrier protein]-C-terminal-Gly-aminoethanethioate + 2-iminoacetate + 1-deoxy-D-xylulose 5-phosphate = [ThiS sulfur-carrier protein]-C-terminal Gly-Gly + 2-[(2R,5Z)-2-carboxy-4-methylthiazol-5(2H)-ylidene]ethyl phosphate + 2 H2O + H(+). It participates in cofactor biosynthesis; thiamine diphosphate biosynthesis. Catalyzes the rearrangement of 1-deoxy-D-xylulose 5-phosphate (DXP) to produce the thiazole phosphate moiety of thiamine. Sulfur is provided by the thiocarboxylate moiety of the carrier protein ThiS. In vitro, sulfur can be provided by H(2)S. This chain is Thiazole synthase, found in Legionella pneumophila (strain Paris).